Here is a 422-residue protein sequence, read N- to C-terminus: Protein phosphatase methylesterase 1 (422 aa).

Residues 1–27 form a disordered region; the sequence is MSDMFRKSVLNKLPHLPPTRAPWADES. Catalysis depends on residues Ser-207, Asp-234, and His-371.

This sequence belongs to the AB hydrolase superfamily.

It carries out the reaction [phosphatase 2A protein]-C-terminal L-leucine methyl ester + H2O = [phosphatase 2A protein]-C-terminal L-leucine + methanol + H(+). Functionally, demethylates proteins that have been reversibly carboxymethylated. Demethylates the phosphatase PP2A catalytic subunit. The sequence is that of Protein phosphatase methylesterase 1 (PPE1) from Cryptococcus neoformans var. neoformans serotype D (strain B-3501A) (Filobasidiella neoformans).